Here is a 696-residue protein sequence, read N- to C-terminus: Glycosyltransferase GlyA (696 aa).

The segment at 1–301 is GT2 domain; the sequence is MLVDDKITVI…NQLSRQEESE (301 aa). The tract at residues 302–556 is GT8 domain; the sequence is KKAIVLAANY…TELGQNHHLH (255 aa). UDP is bound by residues 308 to 313 and 399 to 400; these read AANYGY and DC. The Mn(2+) site is built by D399, D401, and H518. 518-524 is a binding site for UDP; it reads HYLSHRK.

In the N-terminal section; belongs to the glycosyltransferase 2 family. The protein in the central section; belongs to the glycosyltransferase 8 family.

It functions in the pathway protein modification; protein glycosylation. Functionally, involved in the polymorphic O-glycosylation of the serine-rich repeat protein PsrP. Catalyzes the fourth step in glycosylation of PsrP in this bacteria. Can transfer the sugar from UDP-galactose to the terminal sugar moiety of PsrP-GlcNAc-Glc-Gal or of PsrP-GlcNAc-Glc-Glc (using truncated substrates with the PsrP SSR1 domain). Has hydrolytic activity against UDP-galactose and to a lesser extent against UDP-glucose. This Streptococcus pneumoniae serotype 4 (strain ATCC BAA-334 / TIGR4) protein is Glycosyltransferase GlyA.